The following is a 1377-amino-acid chain: Carboxypeptidase D (1377 aa).

The N-terminal stretch at 1-37 (MASGRDERPPWRLGRLRLLPPPPLLLLLLLLRSSAQA) is a signal peptide. The Extracellular portion of the chain corresponds to 38–1296 (AHIKKAEATT…DNRIFGLPRE (1259 aa)). The 318-residue stretch at 62-379 (HYYHEAALGE…ESLITLIEKV (318 aa)) folds into the Peptidase M14 1 domain. Zn(2+) is bound by residues histidine 138 and glutamate 141. The Cell attachment site signature appears at 161–163 (RGD). Asparagine 171 and asparagine 216 each carry an N-linked (GlcNAc...) asparagine glycan. Residues 188–231 (RAREGDCGLGDSGPPGTSGRDNSRGRDLNRSFPDQFSTGEPPSL) form a disordered region. Position 256 (histidine 256) interacts with Zn(2+). At tyrosine 264 the chain carries Phosphotyrosine. Position 269 is a phosphoserine (serine 269). The Proton donor/acceptor role is filled by glutamate 349. N-linked (GlcNAc...) asparagine glycans are attached at residues asparagine 398, asparagine 409, asparagine 428, and asparagine 521. Positions 501 to 791 (HHHHFPDMEI…RSLIQFMKQV (291 aa)) constitute a Peptidase M14 2 domain. Positions 563 and 566 each coordinate Zn(2+). Asparagine 625 carries an N-linked (GlcNAc...) asparagine glycan. Histidine 670 contributes to the Zn(2+) binding site. Residue glutamate 761 is the Proton donor/acceptor of the active site. Asparagine 810, asparagine 854, asparagine 866, asparagine 878, asparagine 952, and asparagine 975 each carry an N-linked (GlcNAc...) asparagine glycan. The tract at residues 874–898 (ADANNESKKGRGHSTSTDDTSDPTS) is disordered. One can recognise a Peptidase M14 3 domain in the interval 929–1208 (RYHSYKDLSE…KSLLSMLVEV (280 aa)). The segment covering 1038–1047 (RERAQEKDCT) has biased composition (basic and acidic residues). The segment at 1038–1064 (RERAQEKDCTSKTGHTNAHGKDLDTDF) is disordered. Asparagine 1067 and asparagine 1139 each carry an N-linked (GlcNAc...) asparagine glycan. A helical membrane pass occupies residues 1297-1317 (LVVTVSGATMSALILTACIIW). S-palmitoyl cysteine attachment occurs at residues cysteine 1314, cysteine 1318, and cysteine 1320. Over 1318 to 1377 (CICSIKSNRHKDGFHRLRQHHDEYEDEIRMMSTGSKKSLLSHEFQDETDTEEETLYSSKH) the chain is Cytoplasmic. Phosphoserine is present on residues serine 1355 and serine 1358. The interval 1356–1377 (LLSHEFQDETDTEEETLYSSKH) is disordered. Threonine 1365 and threonine 1367 each carry phosphothreonine.

Belongs to the peptidase M14 family. Requires Zn(2+) as cofactor.

The protein localises to the cell membrane. It catalyses the reaction Releases C-terminal Arg and Lys from polypeptides.. The polypeptide is Carboxypeptidase D (Cpd) (Mus musculus (Mouse)).